The sequence spans 69 residues: NAD(P)H-quinone oxidoreductase subunit L (69 aa).

2 consecutive transmembrane segments (helical) span residues 5–25 (LILL…ITYF) and 40–60 (GFMY…SPFL).

The protein belongs to the complex I NdhL subunit family. As to quaternary structure, NDH-1 can be composed of about 15 different subunits; different subcomplexes with different compositions have been identified which probably have different functions.

It localises to the cellular thylakoid membrane. The catalysed reaction is a plastoquinone + NADH + (n+1) H(+)(in) = a plastoquinol + NAD(+) + n H(+)(out). The enzyme catalyses a plastoquinone + NADPH + (n+1) H(+)(in) = a plastoquinol + NADP(+) + n H(+)(out). NDH-1 shuttles electrons from an unknown electron donor, via FMN and iron-sulfur (Fe-S) centers, to quinones in the respiratory and/or the photosynthetic chain. The immediate electron acceptor for the enzyme in this species is believed to be plastoquinone. Couples the redox reaction to proton translocation, and thus conserves the redox energy in a proton gradient. Cyanobacterial NDH-1 also plays a role in inorganic carbon-concentration. This Acaryochloris marina (strain MBIC 11017) protein is NAD(P)H-quinone oxidoreductase subunit L.